A 142-amino-acid polypeptide reads, in one-letter code: Transcriptional regulator MraZ (142 aa).

SpoVT-AbrB domains lie at 5 to 47 (THTP…PTET) and 76 to 119 (ASDT…DATE).

This sequence belongs to the MraZ family. As to quaternary structure, forms oligomers.

It is found in the cytoplasm. Its subcellular location is the nucleoid. The protein is Transcriptional regulator MraZ of Cutibacterium acnes (strain DSM 16379 / KPA171202) (Propionibacterium acnes).